We begin with the raw amino-acid sequence, 360 residues long: Peptide chain release factor 1 (360 aa).

N5-methylglutamine is present on glutamine 235.

The protein belongs to the prokaryotic/mitochondrial release factor family. Post-translationally, methylated by PrmC. Methylation increases the termination efficiency of RF1.

It is found in the cytoplasm. Peptide chain release factor 1 directs the termination of translation in response to the peptide chain termination codons UAG and UAA. In Janthinobacterium sp. (strain Marseille) (Minibacterium massiliensis), this protein is Peptide chain release factor 1.